A 192-amino-acid polypeptide reads, in one-letter code: Visinin (192 aa).

Gly2 carries the N-myristoyl glycine lipid modification. 4 EF-hand domains span residues 24-59 (TEEELSRWYEGFQRQCPDGRIRCDEFERIYGNFFPN), 61-96 (EPQGYARHVFRSFDTNDDGTLDFREYIIALHLTSSG), 97-132 (KTHLKLEWAFSLFDVDRNGEVSKSEVLEIITAIFKM), and 146-181 (NSPQKRADKLWAYFNKGENDKIAEGEFIDGVMKNDA). 13 residues coordinate Ca(2+): Asp74, Asn76, Asp78, Thr80, Glu85, Asp110, Asp112, Asn114, Glu116, Glu121, Asn164, Lys166, and Glu171.

It belongs to the recoverin family. As to expression, retinal cell specific protein.

Its function is as follows. Seems to be implicated in the pathway from retinal rod guanylate cyclase to rhodopsin. May be involved in the blocking of the phosphorylation of rhodopsin. In Gallus gallus (Chicken), this protein is Visinin.